Here is a 167-residue protein sequence, read N- to C-terminus: Transcription initiation factor TFIID subunit 10 (167 aa).

2 disordered regions span residues 1–56 (MASD…EESE) and 119–139 (TTNI…NPKD). The segment covering 41–56 (EQPDVEEVPLTTEESE) has biased composition (acidic residues). Over residues 130-139 (SSKDKKNPKD) the composition is skewed to basic and acidic residues.

Belongs to the TAF10 family. As to quaternary structure, belongs to the TFIID complex which is composed of TATA binding protein (Tbp) and a number of TBP-associated factors (TAFs). Also a member of the histone acetylase (HAT) complex. At embryonic stage 9, highest expression is detected within the ectoderm, ventral chord, and anterior foregut primordium. Later in development preferential expression is in the foregut, proventriculus, and central nervous system. Coexpressed with Taf10b in the lateral epidermis and anal plate.

The protein localises to the cytoplasm. Its subcellular location is the nucleus. Its function is as follows. TFIID is a multimeric protein complex that plays a central role in mediating promoter responses to various activators and repressors. In Drosophila melanogaster (Fruit fly), this protein is Transcription initiation factor TFIID subunit 10.